A 277-amino-acid polypeptide reads, in one-letter code: Peptide deformylase 1A, chloroplastic (277 aa).

2 residues coordinate Zn(2+): cysteine 196 and histidine 238. Glutamate 239 is an active-site residue. A Zn(2+)-binding site is contributed by histidine 242.

This sequence belongs to the polypeptide deformylase family. Zn(2+) serves as cofactor.

It is found in the plastid. Its subcellular location is the chloroplast stroma. The catalysed reaction is N-terminal N-formyl-L-methionyl-[peptide] + H2O = N-terminal L-methionyl-[peptide] + formate. Removes the formyl group from the N-terminal Met of newly synthesized proteins. In Solanum lycopersicum (Tomato), this protein is Peptide deformylase 1A, chloroplastic (PDF1A).